A 315-amino-acid polypeptide reads, in one-letter code: Ribosomal RNA small subunit methyltransferase H (315 aa).

S-adenosyl-L-methionine contacts are provided by residues 37–39 (GGH), Asp-57, Phe-83, Asp-105, and Gln-112. Residues 296 to 315 (EVKANPRSRSAVMRVAEKVR) form a disordered region.

Belongs to the methyltransferase superfamily. RsmH family.

Its subcellular location is the cytoplasm. The enzyme catalyses cytidine(1402) in 16S rRNA + S-adenosyl-L-methionine = N(4)-methylcytidine(1402) in 16S rRNA + S-adenosyl-L-homocysteine + H(+). Its function is as follows. Specifically methylates the N4 position of cytidine in position 1402 (C1402) of 16S rRNA. This is Ribosomal RNA small subunit methyltransferase H from Stutzerimonas stutzeri (strain A1501) (Pseudomonas stutzeri).